We begin with the raw amino-acid sequence, 345 residues long: Mycothiol acetyltransferase (345 aa).

N-acetyltransferase domains are found at residues 6 to 149 and 164 to 345; these read DTYE…KAME and FEVL…RGRL. E39 contributes to the 1D-myo-inositol 2-(L-cysteinylamino)-2-deoxy-alpha-D-glucopyranoside binding site. 76–78 contributes to the acetyl-CoA binding site; it reads LAV. 1D-myo-inositol 2-(L-cysteinylamino)-2-deoxy-alpha-D-glucopyranoside is bound by residues E198, K261, and E277. Residues 281–283 and 288–294 each bind acetyl-CoA; these read VCL and RGRGLGQ. Y315 is a binding site for 1D-myo-inositol 2-(L-cysteinylamino)-2-deoxy-alpha-D-glucopyranoside.

Belongs to the acetyltransferase family. MshD subfamily. In terms of assembly, monomer.

The catalysed reaction is 1D-myo-inositol 2-(L-cysteinylamino)-2-deoxy-alpha-D-glucopyranoside + acetyl-CoA = mycothiol + CoA + H(+). Its function is as follows. Catalyzes the transfer of acetyl from acetyl-CoA to desacetylmycothiol (Cys-GlcN-Ins) to form mycothiol. The polypeptide is Mycothiol acetyltransferase (Corynebacterium jeikeium (strain K411)).